A 131-amino-acid polypeptide reads, in one-letter code: Type-5 thionin (131 aa).

A signal peptide spans 1-29; that stretch reads MGGGQKGLESAIVCLLVLGLVLEQVQVEG. Residues 67-131 constitute a propeptide, acidic domain; it reads LASVRSSDEP…GDTLLASLDD (65 aa).

The protein belongs to the plant thionin (TC 1.C.44) family. In terms of processing, is disulfide-linked. As to expression, developing endosperm.

It is found in the secreted. In terms of biological role, thionins are small plant proteins which are toxic to animal cells. They seem to exert their toxic effect at the level of the cell membrane. Their precise function is not known. This Triticum aestivum (Wheat) protein is Type-5 thionin (TTHV).